The primary structure comprises 338 residues: Glutamate/glutamine/aspartate/asparagine-binding protein BztA (338 aa).

The N-terminal stretch at Met-1–Ala-22 is a signal peptide.

It belongs to the bacterial solute-binding protein 3 family.

The protein localises to the periplasm. Its function is as follows. Part of a binding-protein-dependent transport system for glutamate, glutamine, aspartate and asparagine. This is Glutamate/glutamine/aspartate/asparagine-binding protein BztA (bztA) from Rhodobacter capsulatus (strain ATCC BAA-309 / NBRC 16581 / SB1003).